Reading from the N-terminus, the 313-residue chain is UPF0761 membrane protein VV1_0885 (313 aa).

The next 6 membrane-spanning stretches (helical) occupy residues 41-61 (YLAY…LSIL), 104-124 (MTAV…SNID), 139-159 (AVFS…LVGA), 185-205 (LLRW…YLLV), 215-235 (AVVG…GFAA), and 249-269 (ALAA…IVLI). Positions 294–313 (PNNDTELEKDTQRDRFDSES) are disordered. Residues 299-313 (ELEKDTQRDRFDSES) are compositionally biased toward basic and acidic residues.

The protein belongs to the UPF0761 family.

It localises to the cell inner membrane. This Vibrio vulnificus (strain CMCP6) protein is UPF0761 membrane protein VV1_0885.